A 56-amino-acid chain; its full sequence is UPF0434 protein WIGBR2520 (56 aa).

This sequence belongs to the UPF0434 family.

This Wigglesworthia glossinidia brevipalpis protein is UPF0434 protein WIGBR2520.